We begin with the raw amino-acid sequence, 1080 residues long: uncharacterized protein (1080 aa).

The signal sequence occupies residues 1 to 17 (MHKLLVIIAHIIVCAYA). At 18–1042 (DFTGFDNEAG…KSLDLEMIGK (1025 aa)) the chain is on the extracellular side. N-linked (GlcNAc...) asparagine; by host glycosylation is found at asparagine 439, asparagine 664, and asparagine 875. A helical transmembrane segment spans residues 1043 to 1063 (IILLIAFVIVFVILLTIGIIT). The Cytoplasmic segment spans residues 1064–1080 (LVKRHRETLPEDEYLLP).

Its subcellular location is the host membrane. This is an uncharacterized protein from Ostreid herpesvirus 1 (isolate France) (OsHV-1).